Here is an 836-residue protein sequence, read N- to C-terminus: Protein translocase subunit SecA (836 aa).

Residues Gln-85, 103-107, and Asp-492 each bind ATP; that span reads GEGKT. 4 residues coordinate Zn(2+): Cys-820, Cys-822, Cys-831, and Cys-832.

The protein belongs to the SecA family. Monomer and homodimer. Part of the essential Sec protein translocation apparatus which comprises SecA, SecYEG and auxiliary proteins SecDF. Other proteins may also be involved. Zn(2+) is required as a cofactor.

It localises to the cell membrane. The protein localises to the cytoplasm. It catalyses the reaction ATP + H2O + cellular proteinSide 1 = ADP + phosphate + cellular proteinSide 2.. Part of the Sec protein translocase complex. Interacts with the SecYEG preprotein conducting channel. Has a central role in coupling the hydrolysis of ATP to the transfer of proteins into and across the cell membrane, serving as an ATP-driven molecular motor driving the stepwise translocation of polypeptide chains across the membrane. The sequence is that of Protein translocase subunit SecA from Clostridium botulinum (strain Alaska E43 / Type E3).